A 481-amino-acid chain; its full sequence is Glutamyl-tRNA(Gln) amidotransferase subunit A (481 aa).

Active-site charge relay system residues include Lys-74 and Ser-149. Residue Ser-173 is the Acyl-ester intermediate of the active site.

Belongs to the amidase family. GatA subfamily. As to quaternary structure, heterotrimer of A, B and C subunits.

The enzyme catalyses L-glutamyl-tRNA(Gln) + L-glutamine + ATP + H2O = L-glutaminyl-tRNA(Gln) + L-glutamate + ADP + phosphate + H(+). Its function is as follows. Allows the formation of correctly charged Gln-tRNA(Gln) through the transamidation of misacylated Glu-tRNA(Gln) in organisms which lack glutaminyl-tRNA synthetase. The reaction takes place in the presence of glutamine and ATP through an activated gamma-phospho-Glu-tRNA(Gln). This chain is Glutamyl-tRNA(Gln) amidotransferase subunit A, found in Francisella tularensis subsp. tularensis (strain WY96-3418).